Here is a 508-residue protein sequence, read N- to C-terminus: Light-independent protochlorophyllide reductase subunit B (508 aa).

Residue Asp-36 participates in [4Fe-4S] cluster binding. Asp-294 (proton donor) is an active-site residue. Residue 429–430 participates in substrate binding; sequence GM.

This sequence belongs to the ChlB/BchB/BchZ family. In terms of assembly, protochlorophyllide reductase is composed of three subunits; ChlL, ChlN and ChlB. Forms a heterotetramer of two ChlB and two ChlN subunits. [4Fe-4S] cluster serves as cofactor.

The enzyme catalyses chlorophyllide a + oxidized 2[4Fe-4S]-[ferredoxin] + 2 ADP + 2 phosphate = protochlorophyllide a + reduced 2[4Fe-4S]-[ferredoxin] + 2 ATP + 2 H2O. The protein operates within porphyrin-containing compound metabolism; chlorophyll biosynthesis (light-independent). Component of the dark-operative protochlorophyllide reductase (DPOR) that uses Mg-ATP and reduced ferredoxin to reduce ring D of protochlorophyllide (Pchlide) to form chlorophyllide a (Chlide). This reaction is light-independent. The NB-protein (ChlN-ChlB) is the catalytic component of the complex. In Nostoc sp. (strain PCC 7120 / SAG 25.82 / UTEX 2576), this protein is Light-independent protochlorophyllide reductase subunit B.